The primary structure comprises 247 residues: Germin-like protein 9-1 (247 aa).

Residues 1-25 form the signal peptide; that stretch reads MMMSSRSSVSLGVLLLLAVILSAGA. The Cupin type-1 domain occupies 53–201; the sequence is KNLVTGNSGD…SMHTDQATVD (149 aa). The Mn(2+) site is built by H100, H102, and E107. N126 is a glycosylation site (N-linked (GlcNAc...) asparagine). Residue H148 participates in Mn(2+) binding. N-linked (GlcNAc...) asparagine glycosylation is present at N153.

This sequence belongs to the germin family. Oligomer (believed to be a pentamer but probably hexamer).

It is found in the secreted. It localises to the extracellular space. The protein resides in the apoplast. In terms of biological role, may play a role in plant defense. Probably has no oxalate oxidase activity even if the active site is conserved. This chain is Germin-like protein 9-1, found in Oryza sativa subsp. japonica (Rice).